Here is a 368-residue protein sequence, read N- to C-terminus: Seipin-1 (368 aa).

3 consecutive transmembrane segments (helical) span residues 26-46, 101-121, and 292-312; these read WFMVLVTIQADLIYNALVVLS, VMVLALILAVVIGVGIVSLYV, and LCVWTSMYLYVAILTALLWCF. The tract at residues 344 to 368 is disordered; sequence MERRRRERRNQPRRRNFATTQKSYT. The segment covering 346-359 has biased composition (basic residues); it reads RRRRERRNQPRRRN.

This sequence belongs to the seipin family. Expressed in seeds and young seedlings. Not detected in leaves.

The protein localises to the endoplasmic reticulum membrane. Functionally, involved in lipid metabolism and lipid droplet (LD) morphology, number, and size. Facilitates the formation of large-sized LDs and modulates triacylglycerol accumulation. Induces probably a reorganization of the endoplasmic reticulum into LD-forming domains. In Arabidopsis thaliana (Mouse-ear cress), this protein is Seipin-1.